A 360-amino-acid polypeptide reads, in one-letter code: MPELVVTALLAPSRLSLKLLRAFMWSLVFSVALVAAAVYGCIALTHVLCRPRRGCCGRRRSASPACLSDPSLGEHGFLNLKSSGLRLHYVSAGRGNGPLMLFLHGFPENWFSWRYQLREFQSRFHVVAVDLRGYGPSDAPRDVDCYTIDLLLVDIKDVILGLGYSKCILVAHDWGALLAWHFSIYYPSLVERMVVVSGAPMSVYQDYSLHHISQFFRSHYMFLFQLPWLPEKLLSMSDFQILKTTLTHRKTGIPCLTPSELEAFLYNFSQPGGLTGPLNYYRNLFRNFPLEPQELTTPTLLLWGEKDTYLELGLVEAIGSRFVPGRLEAHILPGIGHWIPQSNPQEMHQYMWAFLQDLLD.

The chain crosses the membrane as a helical span at residues 22 to 42 (AFMWSLVFSVALVAAAVYGCI). The Nucleophile role is filled by Asp-173. The Proton donor role is filled by Tyr-281. His-337 acts as the Proton acceptor in catalysis.

The protein belongs to the AB hydrolase superfamily. Epoxide hydrolase family.

The protein resides in the microsome membrane. It catalyses the reaction an epoxide + H2O = an ethanediol. The catalysed reaction is 9,10-epoxyoctadecanoate + H2O = 9,10-dihydroxyoctadecanoate. It carries out the reaction 9,10-epoxy-(12Z)-octadecenoate + H2O = 9,10-dihydroxy-(12Z)-octadecenoate. The enzyme catalyses 8,9-epoxy-(5Z,11Z,14Z)-eicosatrienoate + H2O = 8,9-dihydroxy-(5Z,11Z,14Z)-eicosatrienoate. It catalyses the reaction 11,12-epoxy-(5Z,8Z,14Z)-eicosatrienoate + H2O = 11,12-dihydroxy-(5Z,8Z,14Z)-eicosatrienoate. The catalysed reaction is 14,15-epoxy-(5Z,8Z,11Z)-eicosatrienoate + H2O = 14,15-dihydroxy-(5Z,8Z,11Z)-eicosatrienoate. Its activity is regulated as follows. Inhibited by 1-(1-acetylpiperidin-4-yl)-3-(4-(trifl uoromethoxy)phenyl)urea (TPAU), 1-cyclohexyl-3-dodecylurea (CDU), 12-(3-adamantan-1-yl-ureido)-dodecanoic acid (AUDA), 1-((3S, 5S, 7S)-adamantan-1-yl)-3-(5-(2-(2-ethoxyethoxy) ethoxy)pentyl)urea (AEPU) and to a lesser extent by 8-(3-((3S, 5S, 7S)-adamantan-1-yl)ureido) octanoic acid (AUOA). In terms of biological role, catalyzes the hydrolysis of epoxide-containing fatty acids. Active in vitro against epoxyeicosatrienoic acids (EETs) including 8,9-EET, 9,10-EET, 11,12-EET and 14,15-EET and leukotoxin. This Homo sapiens (Human) protein is Epoxide hydrolase 3 (EPHX3).